The chain runs to 176 residues: MALKEYQVVGRKVPTEHEPVPKLFRMRLFAPNESVAKSRYWYFLKMINKVKKATGEIVAINEISEPKPLKAKVFGIWIRYDSRSGTHNMYKEFRDTTRVGAVEAMYADMAARHRARFRSIRILKVVEVEKKEDVRRNYVKQLLNPHLKFPLPHRRTGVVGLAGKKVFAPHRPSTFY.

It belongs to the eukaryotic ribosomal protein eL20 family. In terms of assembly, component of the large ribosomal subunit (LSU). Mature yeast ribosomes consist of a small (40S) and a large (60S) subunit. The 40S small subunit contains 1 molecule of ribosomal RNA (18S rRNA) and at least 33 different proteins. The large 60S subunit contains 3 rRNA molecules (25S, 5.8S and 5S rRNA) and at least 46 different proteins. eL20 forms multiple interactions with RNA and proteins in the central protuberance, connecting components of core functional centers that are located far apart.

It is found in the cytoplasm. Component of the ribosome, a large ribonucleoprotein complex responsible for the synthesis of proteins in the cell. The small ribosomal subunit (SSU) binds messenger RNAs (mRNAs) and translates the encoded message by selecting cognate aminoacyl-transfer RNA (tRNA) molecules. The large subunit (LSU) contains the ribosomal catalytic site termed the peptidyl transferase center (PTC), which catalyzes the formation of peptide bonds, thereby polymerizing the amino acids delivered by tRNAs into a polypeptide chain. The nascent polypeptides leave the ribosome through a tunnel in the LSU and interact with protein factors that function in enzymatic processing, targeting, and the membrane insertion of nascent chains at the exit of the ribosomal tunnel. The protein is Large ribosomal subunit protein eL20A (rpl2001) of Schizosaccharomyces pombe (strain 972 / ATCC 24843) (Fission yeast).